The following is a 118-amino-acid chain: Large ribosomal subunit protein bL20 (118 aa).

It belongs to the bacterial ribosomal protein bL20 family.

Functionally, binds directly to 23S ribosomal RNA and is necessary for the in vitro assembly process of the 50S ribosomal subunit. It is not involved in the protein synthesizing functions of that subunit. This is Large ribosomal subunit protein bL20 from Ectopseudomonas mendocina (strain ymp) (Pseudomonas mendocina).